We begin with the raw amino-acid sequence, 549 residues long: Chaperonin GroEL 3 (549 aa).

ATP-binding positions include 29–32 (TLGP), 86–90 (DGTTT), G414, 477–479 (NAA), and D493.

Belongs to the chaperonin (HSP60) family. As to quaternary structure, forms a cylinder of 14 subunits composed of two heptameric rings stacked back-to-back. Interacts with the co-chaperonin GroES.

The protein resides in the cytoplasm. It carries out the reaction ATP + H2O + a folded polypeptide = ADP + phosphate + an unfolded polypeptide.. Together with its co-chaperonin GroES, plays an essential role in assisting protein folding. The GroEL-GroES system forms a nano-cage that allows encapsulation of the non-native substrate proteins and provides a physical environment optimized to promote and accelerate protein folding. The chain is Chaperonin GroEL 3 from Frankia casuarinae (strain DSM 45818 / CECT 9043 / HFP020203 / CcI3).